A 291-amino-acid polypeptide reads, in one-letter code: MSGLLNFGVPKGSLENATVELFRKAGWQISISSRSYFPGVDDDEMNCKLIRPQEMGKYVERGTIDAGIAGRDWVRENESDVVEVCEMVYSKVSRRPARWVLVVTRDSAVQKPEDLHGATISTELVGFTKRYFAERNIPVTVEFSWGATEAKVVDGLCDAIVEVTETGSTIKANGLRIVCDLMESVPVLIANKAAWADPWKREKIETIATLLKSALAAEGMVGLKMNAPNDQLEAITRVLPSLKNPTVSHLFNSDWVSIESILPEKEVRRIVPELIKLGAEGIVEYPLNKII.

It belongs to the ATP phosphoribosyltransferase family. Long subfamily. Mg(2+) is required as a cofactor.

The protein localises to the cytoplasm. The enzyme catalyses 1-(5-phospho-beta-D-ribosyl)-ATP + diphosphate = 5-phospho-alpha-D-ribose 1-diphosphate + ATP. It participates in amino-acid biosynthesis; L-histidine biosynthesis; L-histidine from 5-phospho-alpha-D-ribose 1-diphosphate: step 1/9. With respect to regulation, feedback inhibited by histidine. Its function is as follows. Catalyzes the condensation of ATP and 5-phosphoribose 1-diphosphate to form N'-(5'-phosphoribosyl)-ATP (PR-ATP). Has a crucial role in the pathway because the rate of histidine biosynthesis seems to be controlled primarily by regulation of HisG enzymatic activity. The sequence is that of ATP phosphoribosyltransferase 1 from Geobacter sulfurreducens (strain ATCC 51573 / DSM 12127 / PCA).